Here is a 533-residue protein sequence, read N- to C-terminus: MPMTMSQAFIGNFLGNSPKWYKIAILSFLIINPILFFYVSPFVAGWVLVLEFIFTLAMALKCYPLQPGGLLAIEAVAIGMTSASQVLHEIEANLEVLLLLVFMVAGIYFMKQLLLFAFTKMITKVRSKILVSLLFCLASAFLSAFLDALTVIAVIITVAVGFYSIYHKVASGKDFSADHDHTSENKNEEGEDQLNEAELESFRGFLRNLLMHAGVGTALGGVCTMVGEPQNLIIAAQANWQFGEFAIRMSPVTVPVFIAGILTCYIVEKFRIFGYGAQLPDAVHKILCDYDAHEDARRTNKDKMKLIVQAFIGVWLIAGLALHLASVGLIGLSVIILATAFNGITDEHALGKAFEEALPFTALLAVFFSVVAVIIDQQLFAPVIQWALNHEGNTQLVIFYIANGLLSMVSDNVFVGTVYINEVKAALLNGQITRDQFDLLAVAINTGTNLPSVATPNGQAAFLFLLTSALAPLIRLSYGRMVWMALPYTIVLSIVGVMAIQIGFLEQMTQYFYDSHAILHHSVKEALAPATGH.

Transmembrane regions (helical) follow at residues 10–30 (IGNF…SFLI), 67–87 (PGGL…SQVL), 96–116 (VLLL…LLLF), 131–165 (VSLL…FYSI), 209–229 (LLMH…VGEP), 247–267 (IRMS…CYIV), 310–330 (AFIG…VGLI), 355–375 (EEAL…AVII), 396–416 (LVIF…VFVG), 454–474 (ATPN…APLI), and 485–505 (ALPY…IGFL).

It belongs to the NhaB Na(+)/H(+) (TC 2.A.34) antiporter family.

It localises to the cell inner membrane. It carries out the reaction 2 Na(+)(in) + 3 H(+)(out) = 2 Na(+)(out) + 3 H(+)(in). In terms of biological role, na(+)/H(+) antiporter that extrudes sodium in exchange for external protons. This is Na(+)/H(+) antiporter NhaB from Shewanella oneidensis (strain ATCC 700550 / JCM 31522 / CIP 106686 / LMG 19005 / NCIMB 14063 / MR-1).